Reading from the N-terminus, the 109-residue chain is Cell division protein ZapA (109 aa).

Residues 21–97 are a coiled coil; that stretch reads PEQRDALSQA…QTIEQALLDQ (77 aa).

The protein belongs to the ZapA family. Type 1 subfamily. Homodimer. Interacts with FtsZ.

Its subcellular location is the cytoplasm. In terms of biological role, activator of cell division through the inhibition of FtsZ GTPase activity, therefore promoting FtsZ assembly into bundles of protofilaments necessary for the formation of the division Z ring. It is recruited early at mid-cell but it is not essential for cell division. This is Cell division protein ZapA from Enterobacter sp. (strain 638).